A 105-amino-acid polypeptide reads, in one-letter code: Large ribosomal subunit protein uL24 (105 aa).

It belongs to the universal ribosomal protein uL24 family. Part of the 50S ribosomal subunit.

In terms of biological role, one of two assembly initiator proteins, it binds directly to the 5'-end of the 23S rRNA, where it nucleates assembly of the 50S subunit. Its function is as follows. One of the proteins that surrounds the polypeptide exit tunnel on the outside of the subunit. This is Large ribosomal subunit protein uL24 from Clostridium botulinum (strain 657 / Type Ba4).